The chain runs to 518 residues: Bifunctional purine biosynthesis protein PurH (518 aa).

The MGS-like domain occupies 1-144 (MNRRAVLSVS…KNQERVSIVV (144 aa)).

Belongs to the PurH family.

It carries out the reaction (6R)-10-formyltetrahydrofolate + 5-amino-1-(5-phospho-beta-D-ribosyl)imidazole-4-carboxamide = 5-formamido-1-(5-phospho-D-ribosyl)imidazole-4-carboxamide + (6S)-5,6,7,8-tetrahydrofolate. The enzyme catalyses IMP + H2O = 5-formamido-1-(5-phospho-D-ribosyl)imidazole-4-carboxamide. The protein operates within purine metabolism; IMP biosynthesis via de novo pathway; 5-formamido-1-(5-phospho-D-ribosyl)imidazole-4-carboxamide from 5-amino-1-(5-phospho-D-ribosyl)imidazole-4-carboxamide (10-formyl THF route): step 1/1. It participates in purine metabolism; IMP biosynthesis via de novo pathway; IMP from 5-formamido-1-(5-phospho-D-ribosyl)imidazole-4-carboxamide: step 1/1. The chain is Bifunctional purine biosynthesis protein PurH from Desulfitobacterium hafniense (strain DSM 10664 / DCB-2).